Consider the following 403-residue polypeptide: Neuromedin U receptor homolog nmur-2 (403 aa).

Residues 1-27 (MSQCTVEYNVSEITEYVLSTLGERCQS) are Extracellular-facing. The helical transmembrane segment at 28–48 (AGIVIPTVIIYGTIFLLGLFG) threads the bilayer. Over 49–68 (NICTCIVIAANKSMHNPTNY) the chain is Cytoplasmic. A helical transmembrane segment spans residues 69-89 (YLFSLAVSDIIALILGLPMEF). The Extracellular segment spans residues 90 to 109 (YQSLDYSYPYRFSEGICKAR). Residues 110 to 130 (AFLIEFTSYASIMIICCFSFE) traverse the membrane as a helical segment. The Cytoplasmic segment spans residues 131–151 (RWLAICHPLRSKIFSTLWRAN). A helical transmembrane segment spans residues 152–172 (VLIILAWTISFVCALPIAFIV). The Extracellular portion of the chain corresponds to 173 to 216 (QINKLPLPEDAKYQPWTNKVSTDGIFVLHTEFCAMNQSRPDQQK). The chain crosses the membrane as a helical span at residues 217–237 (MIIIFAFTVFFVIPAIAIVIM). At 238–268 (YAHIAVQLESSEIDLKGDKMVKKRRNKSNRT) the chain is on the cytoplasmic side. A helical membrane pass occupies residues 269–289 (VLKMLLSVVITFFICWLPFHI). Residues 290-304 (QRLLSVYTTWSETTT) are Extracellular-facing. A helical transmembrane segment spans residues 305 to 325 (ISPPVQFLSMIVFYISGFCYY). The Cytoplasmic segment spans residues 326 to 403 (SNSAANPILY…PHRKLEVHNY (78 aa)).

The protein belongs to the G-protein coupled receptor 1 family.

The protein localises to the membrane. In terms of biological role, putative G protein-coupled receptor for pyrokinin-like neuropeptide derived from the processing of the neuropeptide precursor capa-1. The polypeptide is Neuromedin U receptor homolog nmur-2 (Caenorhabditis elegans).